Here is a 547-residue protein sequence, read N- to C-terminus: Chaperonin GroEL (547 aa).

ATP contacts are provided by residues 30–33 (TLGP), Lys51, 87–91 (DGTTT), Gly415, 479–481 (NAA), and Asp495.

The protein belongs to the chaperonin (HSP60) family. In terms of assembly, forms a cylinder of 14 subunits composed of two heptameric rings stacked back-to-back. Interacts with the co-chaperonin GroES.

The protein localises to the cytoplasm. The catalysed reaction is ATP + H2O + a folded polypeptide = ADP + phosphate + an unfolded polypeptide.. Its function is as follows. Together with its co-chaperonin GroES, plays an essential role in assisting protein folding. The GroEL-GroES system forms a nano-cage that allows encapsulation of the non-native substrate proteins and provides a physical environment optimized to promote and accelerate protein folding. The polypeptide is Chaperonin GroEL (Cupriavidus taiwanensis (strain DSM 17343 / BCRC 17206 / CCUG 44338 / CIP 107171 / LMG 19424 / R1) (Ralstonia taiwanensis (strain LMG 19424))).